Reading from the N-terminus, the 277-residue chain is Cis-2,3-dihydrobiphenyl-2,3-diol dehydrogenase (277 aa).

Residues 9–36 (LITGGASGLGRALVDRFVAEGAKVAVLD) and aspartate 59 contribute to the NAD(+) site. Serine 142 serves as a coordination point for substrate. The active-site Proton acceptor is the tyrosine 155. Residue lysine 159 coordinates NAD(+).

It belongs to the short-chain dehydrogenases/reductases (SDR) family.

It carries out the reaction (2R,3S)-3-phenylcyclohexa-3,5-diene-1,2-diol + NAD(+) = biphenyl-2,3-diol + NADH + H(+). It functions in the pathway xenobiotic degradation; biphenyl degradation; 2-hydroxy-2,4-pentadienoate and benzoate from biphenyl: step 2/4. This Paraburkholderia xenovorans (strain LB400) protein is Cis-2,3-dihydrobiphenyl-2,3-diol dehydrogenase (bphB).